A 234-amino-acid chain; its full sequence is Large ribosomal subunit protein uL1 (234 aa).

Belongs to the universal ribosomal protein uL1 family. In terms of assembly, part of the 50S ribosomal subunit.

In terms of biological role, binds directly to 23S rRNA. The L1 stalk is quite mobile in the ribosome, and is involved in E site tRNA release. Its function is as follows. Protein L1 is also a translational repressor protein, it controls the translation of the L11 operon by binding to its mRNA. The chain is Large ribosomal subunit protein uL1 from Desulfosudis oleivorans (strain DSM 6200 / JCM 39069 / Hxd3) (Desulfococcus oleovorans).